The sequence spans 201 residues: Outer-membrane lipoprotein carrier protein (201 aa).

The N-terminal stretch at 1-21 (MKKVLLTVCAIALFGSQAAWA) is a signal peptide.

The protein belongs to the LolA family. In terms of assembly, monomer.

It is found in the periplasm. Its function is as follows. Participates in the translocation of lipoproteins from the inner membrane to the outer membrane. Only forms a complex with a lipoprotein if the residue after the N-terminal Cys is not an aspartate (The Asp acts as a targeting signal to indicate that the lipoprotein should stay in the inner membrane). This Proteus mirabilis (strain HI4320) protein is Outer-membrane lipoprotein carrier protein.